A 181-amino-acid polypeptide reads, in one-letter code: Transmembrane protein 47 (181 aa).

Residue Ala-2 is modified to N-acetylalanine. The next 4 helical transmembrane spans lie at Leu-21–Pro-41, Ala-83–Ile-103, Val-115–Ile-135, and Gly-152–Leu-172.

This sequence belongs to the TMEM47 family. In terms of assembly, interacts with CTNNB1, CTNNA1, PRKCI, PARD6B, FYB1. As to expression, expressed in adult brain, fetal brain, cerebellum, heart, lung, prostate and thyroid.

It localises to the membrane. The protein localises to the cell junction. It is found in the adherens junction. In terms of biological role, regulates cell junction organization in epithelial cells. May play a role in the transition from adherens junction to tight junction assembly. May regulate F-actin polymerization required for tight junctional localization dynamics and affect the junctional localization of PARD6B. During podocyte differentiation may negatively regulate activity of FYN and subsequently the abundance of nephrin. This Homo sapiens (Human) protein is Transmembrane protein 47 (TMEM47).